Here is a 214-residue protein sequence, read N- to C-terminus: Rho-related GTP-binding protein RhoJ (214 aa).

Residues Cys-3 and Cys-11 are each lipidated (S-palmitoyl cysteine). Residues 31–36, 46–53, 75–79, 133–136, and 177–178 contribute to the GTP site; these read AVGKTC, FPEEYVPT, DTAGQ, TQID, and AL. Residues 50-58 carry the Effector region motif; sequence YVPTVFDHY. Cys-211 is subject to Cysteine methyl ester. Cys-211 is lipidated: S-farnesyl cysteine. Residues 212–214 constitute a propeptide, removed in mature form; that stretch reads AII.

This sequence belongs to the small GTPase superfamily. Rho family. As to quaternary structure, interacts with the CRIB domains of proteins such as Pak1 and Was/Wasp. Interacts with GLUL. In terms of processing, palmitoylated; regulates localization to the plasma membrane and may be mediated by GLUL. In terms of tissue distribution, highly expressed in heart with moderate levels in lung and liver. Very low levels detected in brain, spleen, skeletal muscle, kidney and testis.

It localises to the cell membrane. Functionally, plasma membrane-associated small GTPase specifically involved in angiogenesis. Required for endothelial cell migration during vascular development via its interaction with GLUL. Elicits the formation of F-actin-rich structures, thereby regulating endothelial cell migration. The protein is Rho-related GTP-binding protein RhoJ (Rhoj) of Mus musculus (Mouse).